Consider the following 149-residue polypeptide: Acyl carrier protein 1, chloroplastic (149 aa).

The N-terminal 59 residues, 1 to 59, are a transit peptide targeting the chloroplast; it reads MAHCLAAVSSFSPSAVRRRLSSQVANVVSSRSSVSFHSRQMSFVSISSRPSSLRFKICC. Residues 69–144 enclose the Carrier domain; the sequence is KETVDKVCMI…DAANLIEKLV (76 aa). Serine 104 is subject to O-(pantetheine 4'-phosphoryl)serine.

The protein belongs to the acyl carrier protein (ACP) family. Post-translationally, 4'-phosphopantetheine is transferred from CoA to a specific serine of apo-ACP by acpS. This modification is essential for activity because fatty acids are bound in thioester linkage to the sulfhydryl of the prosthetic group.

It localises to the plastid. It is found in the chloroplast. The protein operates within lipid metabolism; fatty acid biosynthesis. Carrier of the growing fatty acid chain in fatty acid biosynthesis. The chain is Acyl carrier protein 1, chloroplastic (ACL1.1) from Hordeum vulgare (Barley).